We begin with the raw amino-acid sequence, 449 residues long: 23S rRNA (uracil(1939)-C(5))-methyltransferase RlmD (449 aa).

The TRAM domain occupies 1–66 (MGRSRHHNKL…AKFDEAKVVE (66 aa)). The [4Fe-4S] cluster site is built by Cys-79, Cys-85, Cys-88, and Cys-169. The S-adenosyl-L-methionine site is built by Gln-280, Phe-309, Asn-314, Glu-330, Asn-357, and Asp-379. Cys-405 acts as the Nucleophile in catalysis.

This sequence belongs to the class I-like SAM-binding methyltransferase superfamily. RNA M5U methyltransferase family. RlmD subfamily.

It catalyses the reaction uridine(1939) in 23S rRNA + S-adenosyl-L-methionine = 5-methyluridine(1939) in 23S rRNA + S-adenosyl-L-homocysteine + H(+). Functionally, catalyzes the formation of 5-methyl-uridine at position 1939 (m5U1939) in 23S rRNA. In Francisella tularensis subsp. tularensis (strain FSC 198), this protein is 23S rRNA (uracil(1939)-C(5))-methyltransferase RlmD.